The following is a 546-amino-acid chain: Probable protein kinase UbiB (546 aa).

A Protein kinase domain is found at 124–502 (DFDIKPLASA…QARQGQSRYL (379 aa)). Residues 130-138 (LASASIAQV) and Lys-153 each bind ATP. Asp-288 serves as the catalytic Proton acceptor. 2 consecutive transmembrane segments (helical) span residues 499–519 (SRYL…LLIS) and 521–541 (VEAD…WIIG).

Belongs to the ABC1 family. UbiB subfamily.

It localises to the cell inner membrane. Its pathway is cofactor biosynthesis; ubiquinone biosynthesis [regulation]. Its function is as follows. Is probably a protein kinase regulator of UbiI activity which is involved in aerobic coenzyme Q (ubiquinone) biosynthesis. The protein is Probable protein kinase UbiB of Pectobacterium carotovorum subsp. carotovorum (strain PC1).